Here is a 311-residue protein sequence, read N- to C-terminus: Pyrimidine-specific ribonucleoside hydrolase RihA (311 aa).

His240 is an active-site residue.

It belongs to the IUNH family. RihA subfamily.

Hydrolyzes cytidine or uridine to ribose and cytosine or uracil, respectively. In Salmonella paratyphi B (strain ATCC BAA-1250 / SPB7), this protein is Pyrimidine-specific ribonucleoside hydrolase RihA.